The following is a 549-amino-acid chain: Polycomb group RING finger protein 3 homolog mig-32 (549 aa).

Positions 1–263 are disordered; that stretch reads MTRKRPALAE…EESMRQKYGQ (263 aa). The segment covering 12–29 has biased composition (low complexity); that stretch reads VSSSRSRVTRRSTTGAPS. Acidic residues-rich tracts occupy residues 38-49 and 87-100; these read PESDADSEDDYD and MDDD…DGEV. Positions 118-130 are enriched in basic residues; that stretch reads KTAKLQTKKKKKK. The segment covering 134 to 144 has biased composition (pro residues); it reads PETPPTSPSPS. Residues 145–156 are compositionally biased toward low complexity; it reads PSRSVSPSTTKS. A compositionally biased stretch (basic and acidic residues) spans 205 to 235; that stretch reads EEIKLRERAERKARRIEEAKNRPKLTIEQKL. The stretch at 206–260 forms a coiled coil; the sequence is EIKLRERAERKARRIEEAKNRPKLTIEQKLAKLRKKKERRERRKEQEKEESMRQK. The span at 236 to 247 shows a compositional bias: basic residues; sequence AKLRKKKERRER. The segment covering 248–258 has biased composition (basic and acidic residues); it reads RKEQEKEESMR. Residues 329–368 form an RING-type zinc finger; sequence CGICDGYIVDATTIIDCMHTFCKSCLLTYFESDNNTCPTC.

As to quaternary structure, component of a PRC1-like complex.

Its subcellular location is the nucleus. The protein localises to the nucleolus. Functionally, component of a Polycomb group (PcG) multiprotein PRC1-like complex, a complex class required to maintain the transcriptionally repressive state of many genes, throughout development. Required for ubiquitination of histone H2A. Plays a role in the formation of the male-specific genital sensilla (simple sense organs) known as rays. Required for normal migration of the hermaphrodite specific neurons (HSN) and for extension of some neuronal processes. Represses vulval fates in hypodermal cells that do not normally contribute to vulval development. This Caenorhabditis elegans protein is Polycomb group RING finger protein 3 homolog mig-32.